A 609-amino-acid polypeptide reads, in one-letter code: Phosphoenolpyruvate carboxykinase [GTP] (609 aa).

Substrate is bound by residues Arg-81 and 220-222 (YGG). Residues Lys-229 and His-249 each coordinate Mn(2+). Substrate is bound at residue Ser-271. GTP is bound at residue 272-277 (ACGKTN). Cys-273 is an active-site residue. Asp-296 is a Mn(2+) binding site. 387–389 (NSR) is a substrate binding site. Residues Arg-389, Arg-420, and 515 to 518 (FGEN) each bind GTP.

It belongs to the phosphoenolpyruvate carboxykinase [GTP] family. Monomer. It depends on Mn(2+) as a cofactor.

It is found in the cytoplasm. It carries out the reaction oxaloacetate + GTP = phosphoenolpyruvate + GDP + CO2. The protein operates within carbohydrate biosynthesis; gluconeogenesis. In terms of biological role, catalyzes the conversion of oxaloacetate (OAA) to phosphoenolpyruvate (PEP), the rate-limiting step in the metabolic pathway that produces glucose from lactate and other precursors derived from the citric acid cycle. This is Phosphoenolpyruvate carboxykinase [GTP] from Mycobacterium leprae (strain Br4923).